An 87-amino-acid polypeptide reads, in one-letter code: Phosphoribosyl-ATP pyrophosphatase (87 aa).

This sequence belongs to the PRA-PH family.

It is found in the cytoplasm. It carries out the reaction 1-(5-phospho-beta-D-ribosyl)-ATP + H2O = 1-(5-phospho-beta-D-ribosyl)-5'-AMP + diphosphate + H(+). It participates in amino-acid biosynthesis; L-histidine biosynthesis; L-histidine from 5-phospho-alpha-D-ribose 1-diphosphate: step 2/9. The sequence is that of Phosphoribosyl-ATP pyrophosphatase from Paenarthrobacter aurescens (strain TC1).